A 319-amino-acid polypeptide reads, in one-letter code: Cytochrome f (319 aa).

The N-terminal stretch at 1–35 is a signal peptide; that stretch reads MQNKDACKSLSSWVSLSISLLVLTVPLIWPYNSTA. The heme site is built by phenylalanine 36, cysteine 56, cysteine 59, and histidine 60. A helical transmembrane segment spans residues 285-305; it reads IQGLLVFFASVILAQIFLVLK.

This sequence belongs to the cytochrome f family. In terms of assembly, the 4 large subunits of the cytochrome b6-f complex are cytochrome b6, subunit IV (17 kDa polypeptide, petD), cytochrome f and the Rieske protein, while the 4 small subunits are PetG, PetL, PetM and PetN. The complex functions as a dimer. Heme serves as cofactor.

The protein localises to the plastid. The protein resides in the chloroplast thylakoid membrane. In terms of biological role, component of the cytochrome b6-f complex, which mediates electron transfer between photosystem II (PSII) and photosystem I (PSI), cyclic electron flow around PSI, and state transitions. The polypeptide is Cytochrome f (Staurastrum punctulatum (Green alga)).